A 274-amino-acid chain; its full sequence is Dermonecrotic toxin LcsSicTox-betaIC1 (274 aa).

His5 is a catalytic residue. 2 residues coordinate Mg(2+): Glu25 and Asp27. The active-site Nucleophile is His41. Cystine bridges form between Cys45–Cys51 and Cys47–Cys190. N-linked (GlcNAc...) asparagine glycosylation occurs at Asn66. Position 85 (Asp85) interacts with Mg(2+).

Belongs to the arthropod phospholipase D family. Class II subfamily. Mg(2+) is required as a cofactor. Expressed by the venom gland.

The protein localises to the secreted. The enzyme catalyses an N-(acyl)-sphingosylphosphocholine = an N-(acyl)-sphingosyl-1,3-cyclic phosphate + choline. It catalyses the reaction an N-(acyl)-sphingosylphosphoethanolamine = an N-(acyl)-sphingosyl-1,3-cyclic phosphate + ethanolamine. The catalysed reaction is a 1-acyl-sn-glycero-3-phosphocholine = a 1-acyl-sn-glycero-2,3-cyclic phosphate + choline. It carries out the reaction a 1-acyl-sn-glycero-3-phosphoethanolamine = a 1-acyl-sn-glycero-2,3-cyclic phosphate + ethanolamine. Dermonecrotic toxins cleave the phosphodiester linkage between the phosphate and headgroup of certain phospholipids (sphingolipid and lysolipid substrates), forming an alcohol (often choline) and a cyclic phosphate. This toxin acts on sphingomyelin (SM). It may also act on ceramide phosphoethanolamine (CPE), lysophosphatidylcholine (LPC) and lysophosphatidylethanolamine (LPE), but not on lysophosphatidylserine (LPS), and lysophosphatidylglycerol (LPG). It acts by transphosphatidylation, releasing exclusively cyclic phosphate products as second products. Induces dermonecrosis, hemolysis, increased vascular permeability, edema, inflammatory response, and platelet aggregation. This Loxosceles cf. spinulosa (strain GJB-2008) (Recluse spider) protein is Dermonecrotic toxin LcsSicTox-betaIC1.